We begin with the raw amino-acid sequence, 88 residues long: U1-hexatoxin-Iw1c (88 aa).

An N-terminal signal peptide occupies residues 1–17 (LKFVVLICLVIMASTSA). Glutamine 18 is modified (pyrrolidone carboxylic acid). 5 disulfide bridges follow: cysteine 20–cysteine 31, cysteine 25–cysteine 39, cysteine 30–cysteine 65, cysteine 49–cysteine 73, and cysteine 67–cysteine 80. Residues 86–88 (RSE) constitute a propeptide that is removed on maturation.

This sequence belongs to the MIT-like AcTx family. As to expression, expressed by the venom gland.

The protein localises to the secreted. The chain is U1-hexatoxin-Iw1c from Illawarra wisharti (Illawarra funnel-web spider).